The following is a 196-amino-acid chain: Recombination protein RecR (196 aa).

The segment at 57 to 72 adopts a C4-type zinc-finger fold; it reads CERCHTFTEGAVCETC. Residues 80 to 175 form the Toprim domain; that stretch reads TRLCVVETPA…HVTRLARGVP (96 aa).

This sequence belongs to the RecR family.

Functionally, may play a role in DNA repair. It seems to be involved in an RecBC-independent recombinational process of DNA repair. It may act with RecF and RecO. In Acidovorax sp. (strain JS42), this protein is Recombination protein RecR.